The chain runs to 221 residues: Adenylate kinase (221 aa).

10-15 (GAGKGT) contacts ATP. Positions 30 to 59 (STGDIFRQNLRDNTELGKLAKEYMDKGLLV) are NMP. AMP contacts are provided by residues Thr31, Arg36, 57–59 (LLV), 85–88 (GYPR), and Gln92. The tract at residues 126–163 (GRRVCPVCGATYHIKTSPPKVDNVCDKCGSELIQRSDD) is LID. Residue Arg127 participates in ATP binding. Zn(2+) is bound by residues Cys130 and Cys133. ATP is bound at residue 136 to 137 (TY). The Zn(2+) site is built by Cys150 and Cys153. AMP-binding residues include Arg160 and Arg171. Lys199 contributes to the ATP binding site.

Belongs to the adenylate kinase family. In terms of assembly, monomer.

It is found in the cytoplasm. The catalysed reaction is AMP + ATP = 2 ADP. Its pathway is purine metabolism; AMP biosynthesis via salvage pathway; AMP from ADP: step 1/1. Its function is as follows. Catalyzes the reversible transfer of the terminal phosphate group between ATP and AMP. Plays an important role in cellular energy homeostasis and in adenine nucleotide metabolism. This Caldanaerobacter subterraneus subsp. tengcongensis (strain DSM 15242 / JCM 11007 / NBRC 100824 / MB4) (Thermoanaerobacter tengcongensis) protein is Adenylate kinase.